Consider the following 168-residue polypeptide: Cell division inhibitor SulA (168 aa).

The segment at 1 to 20 (MSTQSVSSHNIESSSFSANQ) is disordered. Positions 105–111 (ALLTGNY) are ftsZ binding. The lon protease binding stretch occupies residues 161–168 (KIHSTLYH).

Belongs to the SulA family. Interacts with FtsZ. Post-translationally, is rapidly cleaved and degraded by the Lon protease once DNA damage is repaired.

Its function is as follows. Component of the SOS system and an inhibitor of cell division. Accumulation of SulA causes rapid cessation of cell division and the appearance of long, non-septate filaments. In the presence of GTP, binds a polymerization-competent form of FtsZ in a 1:1 ratio, thus inhibiting FtsZ polymerization and therefore preventing it from participating in the assembly of the Z ring. This mechanism prevents the premature segregation of damaged DNA to daughter cells during cell division. The sequence is that of Cell division inhibitor SulA from Pectobacterium atrosepticum (strain SCRI 1043 / ATCC BAA-672) (Erwinia carotovora subsp. atroseptica).